The primary structure comprises 96 residues: Growth-regulated alpha protein (96 aa).

Positions 1–24 (MIPATRSLLCAALLLLATSRLATG) are cleaved as a signal peptide. Disulfide bonds link cysteine 33/cysteine 59 and cysteine 35/cysteine 75.

The protein belongs to the intercrine alpha (chemokine CxC) family. In terms of processing, the N-terminal processed form KC(5-72) is produced by proteolytic cleavage after secretion from bone marrow stromal cells.

Its subcellular location is the secreted. Functionally, has chemotactic activity for neutrophils. Contributes to neutrophil activation during inflammation. Hematoregulatory chemokine, which, in vitro, suppresses hematopoietic progenitor cell proliferation. KC(5-72) shows a highly enhanced hematopoietic activity. The sequence is that of Growth-regulated alpha protein (Cxcl1) from Mus musculus (Mouse).